A 65-amino-acid polypeptide reads, in one-letter code: Vespid chemotactic peptide 5h (65 aa).

The N-terminal stretch at 1 to 23 (MKYNIVFLFAIIASLACLQLTFA) is a signal peptide. AXPX repeat units lie at residues 23–26 (AAPA), 27–30 (ASPL), 31–34 (ANPG), 35–38 (ASPD), 39–42 (AAPN), 43–46 (ADPL), and 47–50 (ADPF). Residues 24-49 (APAASPLANPGASPDAAPNADPLADP) constitute a propeptide that is removed on maturation. Leucine amide is present on Leu-62.

Belongs to the MCD family. Crabrolin subfamily. In terms of tissue distribution, expressed by the venom gland.

It localises to the secreted. Its function is as follows. Shows antimicrobial activity against the Gram-negative bacteria E.coli ATCC 25922 (MIC=30 ug/ml), the Gram-positive bacteria S.aureus ATCC 2592 (MIC=5 ug/ml) and the fungus C.albicans ATCC 2002 (MIC=25 ug/ml). Acts as a mast cell degranulating peptide. Its mast cell degranulation activity may be related to the activation of G-protein coupled receptors in mast cells as well as interaction with other proteins located in cell endosomal membranes in the mast cells. Induces the chemotaxis of neutrophils. The chain is Vespid chemotactic peptide 5h from Vespa magnifica (Hornet).